Consider the following 102-residue polypeptide: ATP-dependent Clp protease adapter protein ClpS (102 aa).

It belongs to the ClpS family. In terms of assembly, binds to the N-terminal domain of the chaperone ClpA.

Involved in the modulation of the specificity of the ClpAP-mediated ATP-dependent protein degradation. This is ATP-dependent Clp protease adapter protein ClpS from Shewanella baltica (strain OS155 / ATCC BAA-1091).